The chain runs to 621 residues: 1-deoxy-D-xylulose-5-phosphate synthase (621 aa).

Residues His80 and 121 to 123 (GHS) each bind thiamine diphosphate. Asp152 provides a ligand contact to Mg(2+). Thiamine diphosphate-binding positions include 153 to 154 (GA), Asn181, Tyr288, and Glu370. Position 181 (Asn181) interacts with Mg(2+).

The protein belongs to the transketolase family. DXPS subfamily. In terms of assembly, homodimer. Mg(2+) is required as a cofactor. Requires thiamine diphosphate as cofactor.

It catalyses the reaction D-glyceraldehyde 3-phosphate + pyruvate + H(+) = 1-deoxy-D-xylulose 5-phosphate + CO2. Its pathway is metabolic intermediate biosynthesis; 1-deoxy-D-xylulose 5-phosphate biosynthesis; 1-deoxy-D-xylulose 5-phosphate from D-glyceraldehyde 3-phosphate and pyruvate: step 1/1. In terms of biological role, catalyzes the acyloin condensation reaction between C atoms 2 and 3 of pyruvate and glyceraldehyde 3-phosphate to yield 1-deoxy-D-xylulose-5-phosphate (DXP). The chain is 1-deoxy-D-xylulose-5-phosphate synthase from Serratia proteamaculans (strain 568).